The sequence spans 500 residues: Flt3-interacting zinc finger protein 1 (500 aa).

M1 bears the N-acetylmethionine mark. The interval 1 to 24 (MEDSSLPVVPAPIAAPGPAPSATA) is disordered. Positions 9–19 (VPAPIAAPGPA) are enriched in pro residues. C2H2-type zinc fingers lie at residues 29-51 (FHCS…FARH), 57-79 (HACP…LRSH), 85-107 (YRCS…QVVH), 113-136 (YCCL…KRQH), 204-226 (FACG…WAAH), and 232-254 (FKCP…KLTH). Disordered stretches follow at residues 255–284 (DLQG…ASEV) and 306–328 (KLEA…AAAE). Residues 256 to 267 (LQGSNAPPTQVW) show a composition bias toward polar residues. 5 C2H2-type zinc fingers span residues 336–357 (YQCD…LEAH), 363–386 (YGCG…RASH), 418–440 (FGCS…VLVH), 446–468 (FPCL…RLLH), and 474–496 (FPCH…LKLH). The segment at 383-415 (RASHGEGSGEAAPDGEGNQAAGGPGPGSSSRSK) is disordered.

In terms of assembly, interacts with FLT3 cytoplasmic catalytic domain, following receptor stimulation, in a kinase-independent manner. Does not interact with other structurally related receptor tyrosine kinases, including KIT, CSF1R and PDGFR. Interacts with NRL. As to expression, widely expressed. In the retina, highest expression in the ganglion cell layer.

It localises to the cytoplasm. It is found in the nucleus. May be a transcriptional repressor of NRL function in photoreceptors. Does not repress CRX-mediated transactivation. The protein is Flt3-interacting zinc finger protein 1 (Fiz1) of Mus musculus (Mouse).